The sequence spans 354 residues: S-adenosylmethionine:tRNA ribosyltransferase-isomerase (354 aa).

The protein belongs to the QueA family. Monomer.

Its subcellular location is the cytoplasm. It carries out the reaction 7-aminomethyl-7-carbaguanosine(34) in tRNA + S-adenosyl-L-methionine = epoxyqueuosine(34) in tRNA + adenine + L-methionine + 2 H(+). It functions in the pathway tRNA modification; tRNA-queuosine biosynthesis. Transfers and isomerizes the ribose moiety from AdoMet to the 7-aminomethyl group of 7-deazaguanine (preQ1-tRNA) to give epoxyqueuosine (oQ-tRNA). The polypeptide is S-adenosylmethionine:tRNA ribosyltransferase-isomerase (Salmonella paratyphi C (strain RKS4594)).